A 301-amino-acid polypeptide reads, in one-letter code: Homoserine kinase (301 aa).

86 to 96 lines the ATP pocket; that stretch reads PLARGLGSSAT.

It belongs to the GHMP kinase family. Homoserine kinase subfamily.

Its subcellular location is the cytoplasm. It catalyses the reaction L-homoserine + ATP = O-phospho-L-homoserine + ADP + H(+). It participates in amino-acid biosynthesis; L-threonine biosynthesis; L-threonine from L-aspartate: step 4/5. Functionally, catalyzes the ATP-dependent phosphorylation of L-homoserine to L-homoserine phosphate. The protein is Homoserine kinase of Thermosynechococcus vestitus (strain NIES-2133 / IAM M-273 / BP-1).